The following is a 170-amino-acid chain: ATP synthase subunit b (170 aa).

Residues 11 to 31 form a helical membrane-spanning segment; sequence GLNTGDIIFQLIAMLILLALL.

This sequence belongs to the ATPase B chain family. As to quaternary structure, F-type ATPases have 2 components, F(1) - the catalytic core - and F(0) - the membrane proton channel. F(1) has five subunits: alpha(3), beta(3), gamma(1), delta(1), epsilon(1). F(0) has three main subunits: a(1), b(2) and c(10-14). The alpha and beta chains form an alternating ring which encloses part of the gamma chain. F(1) is attached to F(0) by a central stalk formed by the gamma and epsilon chains, while a peripheral stalk is formed by the delta and b chains.

Its subcellular location is the cell membrane. In terms of biological role, f(1)F(0) ATP synthase produces ATP from ADP in the presence of a proton or sodium gradient. F-type ATPases consist of two structural domains, F(1) containing the extramembraneous catalytic core and F(0) containing the membrane proton channel, linked together by a central stalk and a peripheral stalk. During catalysis, ATP synthesis in the catalytic domain of F(1) is coupled via a rotary mechanism of the central stalk subunits to proton translocation. Component of the F(0) channel, it forms part of the peripheral stalk, linking F(1) to F(0). This chain is ATP synthase subunit b, found in Bacillus pumilus (strain SAFR-032).